The primary structure comprises 255 residues: 5'-nucleotidase SurE (255 aa).

Residues Asp-8, Asp-9, Ser-40, and Asn-93 each coordinate a divalent metal cation.

It belongs to the SurE nucleotidase family. Requires a divalent metal cation as cofactor.

It is found in the cytoplasm. It catalyses the reaction a ribonucleoside 5'-phosphate + H2O = a ribonucleoside + phosphate. Nucleotidase that shows phosphatase activity on nucleoside 5'-monophosphates. This Rhodopseudomonas palustris (strain BisB5) protein is 5'-nucleotidase SurE.